A 94-amino-acid chain; its full sequence is Cyclin-dependent kinases regulatory subunit (94 aa).

This sequence belongs to the CKS family. As to quaternary structure, forms a homohexamer that can probably bind six kinase subunits. Interacts with cdk-1.

It is found in the nucleus. Its function is as follows. Binds to the catalytic subunit of the cyclin dependent kinases and is essential for their biological function. Has a role in the exit from M phase during early mitotic cell division. More specifically, thought to act by degrading B-type cyclins that causes breakdown of nuclear envelope and exit mitosis. This chain is Cyclin-dependent kinases regulatory subunit (cks-1), found in Caenorhabditis elegans.